Here is a 166-residue protein sequence, read N- to C-terminus: MSEQQRQGAERDLYRDTWVRYLGYANEVGEAFRSLVPAAVVWLSYGVSSSYVLADAIDKGKKAGEVPSPEAGRNTRMALAVVDTFVWQSLASVAIPGFTINRLCAASLYVLGTMTHWPPTVRKWTTTTLGLLAIPVIIHPIDRSVDFLLDSSLRKLYPSVEKPSTP.

A run of 2 helical transmembrane segments spans residues 34-54 (SLVP…YVLA) and 78-98 (ALAV…IPGF). Position 123 is an N6-succinyllysine (Lys123). Residues 129-149 (LGLLAIPVIIHPIDRSVDFLL) form a helical membrane-spanning segment.

Belongs to the MTFP1 family.

The protein localises to the mitochondrion inner membrane. Its function is as follows. Involved in the mitochondrial division probably by regulating membrane fission. Loss-of-function leads to apoptosis. The chain is Mitochondrial fission process protein 1 (Mtfp1) from Mus musculus (Mouse).